The primary structure comprises 112 residues: Large ribosomal subunit protein eL33w (112 aa).

It belongs to the eukaryotic ribosomal protein eL33 family.

This Arabidopsis thaliana (Mouse-ear cress) protein is Large ribosomal subunit protein eL33w (RPL35AA).